Here is a 507-residue protein sequence, read N- to C-terminus: Ribonuclease Y (507 aa).

Residues 1–21 traverse the membrane as a helical segment; the sequence is MLWYIVAGAGGLLIGYLIASY. Positions 197-282 constitute a KH domain; that stretch reads TVSTVSLPSD…EMYEKAKQEV (86 aa). The 94-residue stretch at 323 to 416 folds into the HD domain; sequence VLNHSIEVAL…VAAADALSAA (94 aa).

Belongs to the RNase Y family.

It localises to the cell membrane. Endoribonuclease that initiates mRNA decay. The sequence is that of Ribonuclease Y from Thermotoga petrophila (strain ATCC BAA-488 / DSM 13995 / JCM 10881 / RKU-1).